Reading from the N-terminus, the 462-residue chain is Cysteine--tRNA ligase (462 aa).

Cys-29 lines the Zn(2+) pocket. The short motif at 31-41 is the 'HIGH' region element; that stretch reads MTVYDLCHLGH. Residues Cys-217, His-242, and Glu-246 each contribute to the Zn(2+) site. The 'KMSKS' region signature appears at 274-278; the sequence is KMSKS. Lys-277 contacts ATP.

This sequence belongs to the class-I aminoacyl-tRNA synthetase family. As to quaternary structure, monomer. The cofactor is Zn(2+).

It is found in the cytoplasm. The enzyme catalyses tRNA(Cys) + L-cysteine + ATP = L-cysteinyl-tRNA(Cys) + AMP + diphosphate. In Polaromonas sp. (strain JS666 / ATCC BAA-500), this protein is Cysteine--tRNA ligase.